A 262-amino-acid chain; its full sequence is MASSLHKHLLSAARHHLKETKRMSMMVALNLAAEILAVDCGLKPCFLYDYTTSGVQQICSYLKELQNLGLIVGHLHILNVEETILIINVTKAVSYLETLLHSQDLHLIDVSNYLSQPELVSSNQVPQIHAQLAELLGHIKPYQSGQPTSVSVGGIQSPEWNLCTMFGFLLQFPSTYWFDTQKGFENCLSFTPLRLFTVQANCSRIGHQSVQIYSFTVPECVYQATQVHLEDWSKSLKQAFNEQNYFTDLEIITNTAQVCCVY.

Belongs to the UPF0739 family.

The chain is UPF0739 protein C1orf74 homolog from Xenopus laevis (African clawed frog).